A 230-amino-acid polypeptide reads, in one-letter code: UPF0758 protein ABC2615 (230 aa).

The MPN domain occupies 104–226; it reads VISSPEDAAE…FISLKERGFF (123 aa). Zn(2+) contacts are provided by His175, His177, and Asp188. The JAMM motif motif lies at 175 to 188; that stretch reads HNHPSGDPSPSPED.

This sequence belongs to the UPF0758 family.

The protein is UPF0758 protein ABC2615 of Shouchella clausii (strain KSM-K16) (Alkalihalobacillus clausii).